A 1938-amino-acid chain; its full sequence is Myosin-6 (1938 aa).

The 50-residue stretch at 31-80 folds into the Myosin N-terminal SH3-like domain; that stretch reads DIRTECFVPDDKEEYVKAKIVSREGGKVTAETENGKTVTVKEDQVMQQNP. A Myosin motor domain is found at 84–779; that stretch reads DKIEDMAMLT…LLGLLEEMRD (696 aa). At Lys128 the chain carries N6,N6,N6-trimethyllysine. An ATP-binding site is contributed by 177-184; the sequence is GESGAGKT. Thr378 is modified (phosphothreonine). At Ser416 the chain carries Phosphoserine. Actin-binding regions lie at residues 656–678 and 758–772; these read LNKLMTNLRTTHPHFVRCIIPNE and KFGHTKVFFKAGLLG. An IQ domain is found at 782–811; the sequence is LSRIITRIQAQARGQLMRIEFKKMVERRDA. 2 calmodulin-binding regions span residues 789–806 and 815–832; these read IQAQARGQLMRIEFKKMV and IQWNIRAFMGVKNWPWMK. A coiled-coil region spans residues 842 to 1938; that stretch reads KSAETEKEMA…GAKQKMHDEE (1097 aa). 2 positions are modified to phosphoserine: Ser1089 and Ser1138. Residue Tyr1260 is modified to Phosphotyrosine. Ser1270 is modified (phosphoserine). 2 positions are modified to phosphothreonine: Thr1276 and Thr1283. Position 1308 is a phosphoserine (Ser1308). The residue at position 1309 (Tyr1309) is a Phosphotyrosine. At Thr1310 the chain carries Phosphothreonine. Phosphoserine is present on Ser1511. A phosphothreonine mark is found at Thr1514 and Thr1680. The segment at 1907 to 1938 is disordered; sequence AEERADIAESQVNKLRAKSRDIGAKQKMHDEE. A compositionally biased stretch (basic and acidic residues) spans 1924–1938; that stretch reads KSRDIGAKQKMHDEE.

The protein belongs to the TRAFAC class myosin-kinesin ATPase superfamily. Myosin family. Muscle myosin is a hexameric protein that consists of 2 heavy chain subunits (MHC), 2 alkali light chain subunits (MLC) and 2 regulatory light chain subunits (MLC-2).

The protein resides in the cytoplasm. It localises to the myofibril. Muscle contraction. The protein is Myosin-6 (Myh6) of Rattus norvegicus (Rat).